Reading from the N-terminus, the 515-residue chain is 2,3-bisphosphoglycerate-independent phosphoglycerate mutase (515 aa).

Mn(2+)-binding residues include Asp14 and Ser64. Residue Ser64 is the Phosphoserine intermediate of the active site. Substrate contacts are provided by residues His125, 155–156, Arg187, Arg193, 263–266, and Lys337; these read RD and RADR. The Mn(2+) site is built by Asp404, His408, Asp445, His446, and His464.

The protein belongs to the BPG-independent phosphoglycerate mutase family. Monomer. It depends on Mn(2+) as a cofactor.

It catalyses the reaction (2R)-2-phosphoglycerate = (2R)-3-phosphoglycerate. It participates in carbohydrate degradation; glycolysis; pyruvate from D-glyceraldehyde 3-phosphate: step 3/5. Functionally, catalyzes the interconversion of 2-phosphoglycerate and 3-phosphoglycerate. The polypeptide is 2,3-bisphosphoglycerate-independent phosphoglycerate mutase (Yersinia pseudotuberculosis serotype I (strain IP32953)).